A 194-amino-acid polypeptide reads, in one-letter code: Protein GrpE (194 aa).

The protein belongs to the GrpE family. In terms of assembly, homodimer.

It localises to the cytoplasm. Its function is as follows. Participates actively in the response to hyperosmotic and heat shock by preventing the aggregation of stress-denatured proteins, in association with DnaK and GrpE. It is the nucleotide exchange factor for DnaK and may function as a thermosensor. Unfolded proteins bind initially to DnaJ; upon interaction with the DnaJ-bound protein, DnaK hydrolyzes its bound ATP, resulting in the formation of a stable complex. GrpE releases ADP from DnaK; ATP binding to DnaK triggers the release of the substrate protein, thus completing the reaction cycle. Several rounds of ATP-dependent interactions between DnaJ, DnaK and GrpE are required for fully efficient folding. In Aliivibrio salmonicida (strain LFI1238) (Vibrio salmonicida (strain LFI1238)), this protein is Protein GrpE.